The sequence spans 499 residues: 2-isopropylmalate synthase (499 aa).

The Pyruvate carboxyltransferase domain maps to 5-267 (IKIFDTTLRD…ETGINLGEIA (263 aa)). Residues Asp-14, His-202, His-204, and Asn-238 each coordinate Mn(2+). The regulatory domain stretch occupies residues 391–499 (SVEVLHVISG…YLSALNRIRR (109 aa)).

This sequence belongs to the alpha-IPM synthase/homocitrate synthase family. LeuA type 1 subfamily. Mn(2+) serves as cofactor.

Its subcellular location is the cytoplasm. It catalyses the reaction 3-methyl-2-oxobutanoate + acetyl-CoA + H2O = (2S)-2-isopropylmalate + CoA + H(+). Its pathway is amino-acid biosynthesis; L-leucine biosynthesis; L-leucine from 3-methyl-2-oxobutanoate: step 1/4. Its function is as follows. Catalyzes the condensation of the acetyl group of acetyl-CoA with 3-methyl-2-oxobutanoate (2-ketoisovalerate) to form 3-carboxy-3-hydroxy-4-methylpentanoate (2-isopropylmalate). The protein is 2-isopropylmalate synthase of Pyrococcus furiosus (strain ATCC 43587 / DSM 3638 / JCM 8422 / Vc1).